The following is a 396-amino-acid chain: Activity-regulated cytoskeleton-associated protein (396 aa).

Residues 54-78 are a coiled coil; that stretch reads SKQVERELKGLHRSVGKLENNLDGY. The tract at residues 89 to 100 is interaction with SH3GL1 or SH3GL3; sequence KSIKACLCRCQE. Positions 177–207 are disordered; it reads PPAAGELPEQESVEAQQYQSWGPGEDGQPSP. The interaction with DNM2 stretch occupies residues 195-214; the sequence is QSWGPGEDGQPSPGVDTQIF. Ser-260 carries the phosphoserine; by CaMK2 modification. Residues Lys-268 and Lys-269 each participate in a glycyl lysine isopeptide (Lys-Gly) (interchain with G-Cter in ubiquitin) cross-link. Thr-278 carries the post-translational modification Phosphothreonine. A disordered region spans residues 356–396; it reads QDGLEQAAEPSGTPLPTEDETEALTPALTSESVASDRTQPE. Residues 382 to 396 show a composition bias toward polar residues; that stretch reads ALTSESVASDRTQPE.

This sequence belongs to the ARC/ARG3.1 family. Homooligomer; homooligomerizes into virion-like capsids. Interacts with SH3GL1/endophilin-2, SH3GL3/endophilin-3 and DNM2/DYN2. Interacts with CAMK2B (in the kinase inactive state); leading to target ARC to inactive synapses. Interacts with PSEN1. Interacts with GRIN2A and GRIN2B; inhibiting homooligomerization. Post-translationally, ubiquitinated by UBE3A, leading to its degradation by the proteasome, thereby promoting AMPA receptors (AMPARs) expression at synapses. Ubiquitinated by RNF216 at Lys-268 and Lys-269 limiting ARC protein levels induced by synaptic activity and thus regulating ARC-dependent forms of synaptic plasticity. In terms of processing, palmitoylation anchors the protein into the membrane by allowing direct insertion into the hydrophobic core of the lipid bilayer. Phosphorylation at Ser-260 by CaMK2 prevents homooligomerization into virion-like capsids by disrupting an interaction surface essential for high-order oligomerization. Phosphorylation by CaMK2 inhibits synaptic activity. Expressed in brain and testis. In primary visual cortex, detected in all cortical layers with the exception of layer 5: present at highest level in layers 2/3 and 4, the predominant sites of ocular dominance plasticity (at protein level). Also expressed in skin-migratory dendritic cells.

Its subcellular location is the extracellular vesicle membrane. The protein resides in the postsynaptic cell membrane. The protein localises to the synapse. It localises to the postsynaptic density. It is found in the early endosome membrane. Its subcellular location is the cell projection. The protein resides in the dendrite. The protein localises to the cytoplasm. It localises to the cytoskeleton. It is found in the cell cortex. Its subcellular location is the dendritic spine. The protein resides in the cytoplasmic vesicle. The protein localises to the secretory vesicle. It localises to the acrosome. It is found in the clathrin-coated vesicle membrane. In terms of biological role, master regulator of synaptic plasticity that self-assembles into virion-like capsids that encapsulate RNAs and mediate intercellular RNA transfer in the nervous system. ARC protein is released from neurons in extracellular vesicles that mediate the transfer of ARC mRNA into new target cells, where ARC mRNA can undergo activity-dependent translation. ARC capsids are endocytosed and are able to transfer ARC mRNA into the cytoplasm of neurons. Acts as a key regulator of synaptic plasticity: required for protein synthesis-dependent forms of long-term potentiation (LTP) and depression (LTD) and for the formation of long-term memory. Regulates synaptic plasticity by promoting endocytosis of AMPA receptors (AMPARs) in response to synaptic activity: this endocytic pathway maintains levels of surface AMPARs in response to chronic changes in neuronal activity through synaptic scaling, thereby contributing to neuronal homeostasis. Acts as a postsynaptic mediator of activity-dependent synapse elimination in the developing cerebellum by mediating elimination of surplus climbing fiber synapses. Accumulates at weaker synapses, probably to prevent their undesired enhancement. This suggests that ARC-containing virion-like capsids may be required to eliminate synaptic material. Required to transduce experience into long-lasting changes in visual cortex plasticity and for long-term memory. Involved in postsynaptic trafficking and processing of amyloid-beta A4 (APP) via interaction with PSEN1. In addition to its role in synapses, also involved in the regulation of the immune system: specifically expressed in skin-migratory dendritic cells and regulates fast dendritic cell migration, thereby regulating T-cell activation. The protein is Activity-regulated cytoskeleton-associated protein of Mus musculus (Mouse).